The following is a 266-amino-acid chain: Glucosamine-6-phosphate deaminase (266 aa).

Catalysis depends on D72, which acts as the Proton acceptor; for enolization step. Residue D141 is the For ring-opening step of the active site. The active-site Proton acceptor; for ring-opening step is H143. Catalysis depends on E148, which acts as the For ring-opening step.

Belongs to the glucosamine/galactosamine-6-phosphate isomerase family. NagB subfamily. Homohexamer.

The enzyme catalyses alpha-D-glucosamine 6-phosphate + H2O = beta-D-fructose 6-phosphate + NH4(+). The protein operates within amino-sugar metabolism; N-acetylneuraminate degradation; D-fructose 6-phosphate from N-acetylneuraminate: step 5/5. Its activity is regulated as follows. Allosterically activated by N-acetylglucosamine 6-phosphate (GlcNAc6P). Catalyzes the reversible isomerization-deamination of glucosamine 6-phosphate (GlcN6P) to form fructose 6-phosphate (Fru6P) and ammonium ion. In Vibrio campbellii (strain ATCC BAA-1116), this protein is Glucosamine-6-phosphate deaminase.